Consider the following 383-residue polypeptide: tRNA-specific 2-thiouridylase MnmA (383 aa).

Residues 9–16 (GMSGGVDS) and M35 each bind ATP. The tract at residues 95–97 (NPD) is interaction with target base in tRNA. The active-site Nucleophile is the C100. C100 and C198 are joined by a disulfide. G124 is an ATP binding site. Positions 148–150 (KDQ) are interaction with tRNA. Residue C198 is the Cysteine persulfide intermediate of the active site. Positions 310 to 311 (RY) are interaction with tRNA.

It belongs to the MnmA/TRMU family.

The protein localises to the cytoplasm. The catalysed reaction is S-sulfanyl-L-cysteinyl-[protein] + uridine(34) in tRNA + AH2 + ATP = 2-thiouridine(34) in tRNA + L-cysteinyl-[protein] + A + AMP + diphosphate + H(+). Its function is as follows. Catalyzes the 2-thiolation of uridine at the wobble position (U34) of tRNA, leading to the formation of s(2)U34. The polypeptide is tRNA-specific 2-thiouridylase MnmA (Paraburkholderia phytofirmans (strain DSM 17436 / LMG 22146 / PsJN) (Burkholderia phytofirmans)).